The chain runs to 791 residues: AP-1 complex subunit gamma-like 2 (791 aa).

Residues 671–786 (APIPSVRVFE…QEIFEVDNLP (116 aa)) form the GAE domain.

Belongs to the adaptor complexes large subunit family. As to quaternary structure, may interact with AP1S1/Sigma1A-adaptin and AP1S2/Sigma1B-adaptin. Probably does not interact with APB1. Interacts (via GAE domain) with RABEP1, NECAP1, CLINT1 and AFTPH/aftiphilin. Interacts with HBV major surface antigen L. Interacts with HBV core protein C in a ubiquitin-dependent manner. Binds ubiquitin. Widely expressed.

Its subcellular location is the golgi apparatus membrane. The protein localises to the cytoplasmic vesicle membrane. It is found in the endosome membrane. Functionally, may function in protein sorting in late endosomes or multivesucular bodies (MVBs). Involved in MVB-assisted maturation of hepatitis B virus (HBV). The chain is AP-1 complex subunit gamma-like 2 (Ap1g2) from Mus musculus (Mouse).